A 185-amino-acid chain; its full sequence is Elongation factor P (185 aa).

Belongs to the elongation factor P family.

It is found in the cytoplasm. Its pathway is protein biosynthesis; polypeptide chain elongation. In terms of biological role, involved in peptide bond synthesis. Stimulates efficient translation and peptide-bond synthesis on native or reconstituted 70S ribosomes in vitro. Probably functions indirectly by altering the affinity of the ribosome for aminoacyl-tRNA, thus increasing their reactivity as acceptors for peptidyl transferase. The protein is Elongation factor P of Burkholderia multivorans (strain ATCC 17616 / 249).